Reading from the N-terminus, the 683-residue chain is PTS system mannose-specific EIIBCA component (683 aa).

Residues 1–89 form the PTS EIIB type-1 domain; it reads MASKLTTTSQ…LKLDGMKHFA (89 aa). Cys-28 serves as the catalytic Phosphocysteine intermediate; for EIIB activity. A PTS EIIC type-1 domain is found at 117 to 476; the sequence is EFLSDTFRPI…NEERDEARAK (360 aa). The next 10 helical transmembrane spans lie at 126–146, 162–182, 193–213, 225–245, 260–280, 303–323, 344–364, 376–396, 409–429, and 442–462; these read ILWA…ADTF, YVFL…MVGA, WIGA…LGSA, VLND…GLYW, MVFV…FLLG, FILS…GLHW, PMGA…LLSI, LGGM…YGVL, GCLA…AFVF, and LGYT…VLAL. The 105-residue stretch at 550-654 folds into the PTS EIIA type-1 domain; it reads DPIFAAGKLG…PLITPVVVSN (105 aa). The active-site Tele-phosphohistidine intermediate; for EIIA activity is the His-602.

It localises to the cell membrane. The catalysed reaction is D-mannose(out) + N(pros)-phospho-L-histidyl-[protein] = D-mannose 6-phosphate(in) + L-histidyl-[protein]. The phosphoenolpyruvate-dependent sugar phosphotransferase system (sugar PTS), a major carbohydrate active -transport system, catalyzes the phosphorylation of incoming sugar substrates concomitantly with their translocation across the cell membrane. This system is involved in mannose transport. In Corynebacterium glutamicum (strain ATCC 13032 / DSM 20300 / JCM 1318 / BCRC 11384 / CCUG 27702 / LMG 3730 / NBRC 12168 / NCIMB 10025 / NRRL B-2784 / 534), this protein is PTS system mannose-specific EIIBCA component (ptsM).